A 483-amino-acid polypeptide reads, in one-letter code: Adenylyltransferase and sulfurtransferase uba4 (483 aa).

Residues Gly-100, Asp-121, 128–132, Lys-145, and 178–179 each bind ATP; these read SNLHR and DN. The Zn(2+) site is built by Cys-227 and Cys-230. Catalysis depends on Cys-244, which acts as the Glycyl thioester intermediate; for adenylyltransferase activity. Residues Cys-306 and Cys-309 each contribute to the Zn(2+) site. One can recognise a Rhodanese domain in the interval 366–481; that stretch reads ISKEPTIIDV…WREQIDPDWP (116 aa). Cys-436 (cysteine persulfide intermediate; for sulfurtransferase activity) is an active-site residue.

The protein in the N-terminal section; belongs to the HesA/MoeB/ThiF family. UBA4 subfamily. It depends on Zn(2+) as a cofactor.

The protein localises to the cytoplasm. Its subcellular location is the cytosol. The catalysed reaction is [molybdopterin-synthase sulfur-carrier protein]-C-terminal Gly-Gly + ATP + H(+) = [molybdopterin-synthase sulfur-carrier protein]-C-terminal Gly-Gly-AMP + diphosphate. It catalyses the reaction [molybdopterin-synthase sulfur-carrier protein]-C-terminal Gly-Gly-AMP + S-sulfanyl-L-cysteinyl-[cysteine desulfurase] + AH2 = [molybdopterin-synthase sulfur-carrier protein]-C-terminal-Gly-aminoethanethioate + L-cysteinyl-[cysteine desulfurase] + A + AMP + 2 H(+). It participates in tRNA modification; 5-methoxycarbonylmethyl-2-thiouridine-tRNA biosynthesis. Plays a central role in 2-thiolation of mcm(5)S(2)U at tRNA wobble positions of cytosolic tRNA(Lys), tRNA(Glu) and tRNA(Gln). Also essential during biosynthesis of the molybdenum cofactor. Acts by mediating the C-terminal thiocarboxylation of sulfur carriers urm1 and mocs2a. Its N-terminus first activates urm1 and mocs2a as acyl-adenylates (-COAMP), then the persulfide sulfur on the catalytic cysteine is transferred to urm1 and mocs2a to form thiocarboxylation (-COSH) of their C-terminus. The reaction probably involves hydrogen sulfide that is generated from the persulfide intermediate and that acts as a nucleophile towards urm1 and mocs2a. Subsequently, a transient disulfide bond is formed. Does not use thiosulfate as sulfur donor; nfs1 probably acting as a sulfur donor for thiocarboxylation reactions. The chain is Adenylyltransferase and sulfurtransferase uba4 from Neosartorya fischeri (strain ATCC 1020 / DSM 3700 / CBS 544.65 / FGSC A1164 / JCM 1740 / NRRL 181 / WB 181) (Aspergillus fischerianus).